The following is a 471-amino-acid chain: Glutamate--tRNA ligase (471 aa).

Residues P9–G19 carry the 'HIGH' region motif. C98, C100, C125, and D127 together coordinate Zn(2+). Residues K237–R241 carry the 'KMSKS' region motif. Residue K240 coordinates ATP.

This sequence belongs to the class-I aminoacyl-tRNA synthetase family. Glutamate--tRNA ligase type 1 subfamily. As to quaternary structure, monomer. Requires Zn(2+) as cofactor.

It is found in the cytoplasm. The catalysed reaction is tRNA(Glu) + L-glutamate + ATP = L-glutamyl-tRNA(Glu) + AMP + diphosphate. Functionally, catalyzes the attachment of glutamate to tRNA(Glu) in a two-step reaction: glutamate is first activated by ATP to form Glu-AMP and then transferred to the acceptor end of tRNA(Glu). In Yersinia pestis, this protein is Glutamate--tRNA ligase.